A 503-amino-acid chain; its full sequence is ATP synthase subunit alpha, chloroplastic (503 aa).

170 to 177 (GDRQTGKT) lines the ATP pocket.

This sequence belongs to the ATPase alpha/beta chains family. As to quaternary structure, F-type ATPases have 2 components, CF(1) - the catalytic core - and CF(0) - the membrane proton channel. CF(1) has five subunits: alpha(3), beta(3), gamma(1), delta(1), epsilon(1). CF(0) has four main subunits: a, b, b' and c.

It localises to the plastid. The protein localises to the chloroplast thylakoid membrane. It catalyses the reaction ATP + H2O + 4 H(+)(in) = ADP + phosphate + 5 H(+)(out). In terms of biological role, produces ATP from ADP in the presence of a proton gradient across the membrane. The alpha chain is a regulatory subunit. The chain is ATP synthase subunit alpha, chloroplastic from Gracilaria tenuistipitata var. liui (Red alga).